Reading from the N-terminus, the 234-residue chain is Orofacial cleft 1 candidate gene 1 protein homolog (234 aa).

2 disordered regions span residues methionine 1–serine 21 and serine 201–arginine 234. Positions lysine 202 to lysine 213 are enriched in basic residues. Positions phenylalanine 223–arginine 234 are enriched in basic and acidic residues.

This Gallus gallus (Chicken) protein is Orofacial cleft 1 candidate gene 1 protein homolog (OFCC1).